The chain runs to 156 residues: Ribosome maturation factor RimP (156 aa).

The protein belongs to the RimP family.

The protein localises to the cytoplasm. Its function is as follows. Required for maturation of 30S ribosomal subunits. This Bacillus velezensis (strain DSM 23117 / BGSC 10A6 / LMG 26770 / FZB42) (Bacillus amyloliquefaciens subsp. plantarum) protein is Ribosome maturation factor RimP.